Reading from the N-terminus, the 609-residue chain is Carotenoid cleavage dioxygenase 7, chloroplastic (609 aa).

The N-terminal 34 residues, 1–34, are a transit peptide targeting the chloroplast; that stretch reads MATQAIAPMHAAVVHRHHVLPPRRCVRRRGVFVR. Positions 263, 316, 394, and 603 each coordinate Fe cation.

Belongs to the carotenoid oxygenase family. The cofactor is Fe(2+). Expressed in vascular bundles of roots, leaves, stems and panicles.

Its subcellular location is the plastid. The protein resides in the chloroplast. The enzyme catalyses 9-cis-beta-carotene + O2 = 9-cis-10'-apo-beta-carotenal + beta-ionone. Functionally, involved in strigolactones biosynthesis by cleaving asymmetrically a variety of linear and cyclic carotenoids at the 9-10 double bond. Produces one C(13) beta-ionone and the C(27) 10'-apo-beta-carotenal. Strigolactones are hormones that inhibit tillering and shoot branching through the MAX-dependent pathway, contribute to the regulation of shoot architectural response to phosphate-limiting conditions and function as rhizosphere signal that stimulates hyphal branching of arbuscular mycorrhizal fungi and trigger seed germination of root parasitic weeds. Can rescue the phenotype in the Arabidopsis max3 mutant. The protein is Carotenoid cleavage dioxygenase 7, chloroplastic (CCD7) of Oryza sativa subsp. japonica (Rice).